A 78-amino-acid chain; its full sequence is NAD(P)H-quinone oxidoreductase subunit O (78 aa).

This sequence belongs to the complex I NdhO subunit family. In terms of assembly, NDH-1 can be composed of about 15 different subunits; different subcomplexes with different compositions have been identified which probably have different functions.

It is found in the cellular thylakoid membrane. It carries out the reaction a plastoquinone + NADH + (n+1) H(+)(in) = a plastoquinol + NAD(+) + n H(+)(out). It catalyses the reaction a plastoquinone + NADPH + (n+1) H(+)(in) = a plastoquinol + NADP(+) + n H(+)(out). NDH-1 shuttles electrons from an unknown electron donor, via FMN and iron-sulfur (Fe-S) centers, to quinones in the respiratory and/or the photosynthetic chain. The immediate electron acceptor for the enzyme in this species is believed to be plastoquinone. Couples the redox reaction to proton translocation, and thus conserves the redox energy in a proton gradient. Cyanobacterial NDH-1 also plays a role in inorganic carbon-concentration. The sequence is that of NAD(P)H-quinone oxidoreductase subunit O from Prochlorococcus marinus (strain MIT 9301).